The sequence spans 305 residues: Tetraspanin-12 (305 aa).

The Cytoplasmic portion of the chain corresponds to 1-12 (MAREDSVKCLRC). Residues cysteine 9 and cysteine 12 are each lipidated (S-palmitoyl cysteine). A helical transmembrane segment spans residues 13-33 (LLYALNLLFWLMSISVLAVSA). Residues 34–59 (WMRDYLNNVLTLTAETRVEEAVILTY) are Extracellular-facing. A helical membrane pass occupies residues 60–80 (FPVVHPVMIAVCCFLIIVGML). Residues 81–89 (GYCGTVKRN) are Cytoplasmic-facing. The S-palmitoyl cysteine moiety is linked to residue cysteine 83. A helical membrane pass occupies residues 90–110 (LLLLAWYFGTLLVIFCVELAC). The Extracellular segment spans residues 111–224 (GVWTYEQEVM…RGTKQLQVLR (114 aa)). The chain crosses the membrane as a helical span at residues 225–245 (FLGISIGVTQILAMILTITLL). Residues 246 to 305 (WALYYDRREPGTDQMLSLKNDTSQHLSCHSVELLKPSLSRIFEHTSMANSFNTHFEMEEL) lie on the Cytoplasmic side of the membrane.

This sequence belongs to the tetraspanin (TM4SF) family. In terms of assembly, interacts (when palmitoylated) with ADAM10. Interacts with MMP14/MT1-MMP. Component of a complex, at least composed of TSPAN12, FZD4 and norrin (NDP). In terms of processing, palmitoylated; required for interaction with ADAM10. In terms of tissue distribution, expressed in the neonatal retinal vasculature but not other retinal tissues. Also detected in the neonatal meningeal vasculature and in nonvascular cell types, such as the smooth muscle cells in the neonatal intestine.

The protein resides in the cell membrane. Its function is as follows. Regulator of cell surface receptor signal transduction. Acts as a regulator of membrane proteinases such as ADAM10 and MMP14/MT1-MMP. Activates ADAM10-dependent cleavage activity of amyloid precursor protein (APP). Activates MMP14/MT1-MMP-dependent cleavage activity. Plays a central role in retinal vascularization by regulating norrin (NDP) signal transduction. Acts in concert with norrin (NDP) to promote FZD4 multimerization and subsequent activation of FZD4, leading to promote accumulation of beta-catenin (CTNNB1) and stimulate LEF/TCF-mediated transcriptional programs. Suprisingly, it only activate the norrin (NDP)-dependent activation of FZD4, while it does not activate the Wnt-dependent activation of FZD4, suggesting the existence of a Wnt-independent signaling that also promote accumulation the beta-catenin (CTNNB1). The polypeptide is Tetraspanin-12 (Tspan12) (Mus musculus (Mouse)).